Reading from the N-terminus, the 238-residue chain is Lactate utilization protein A (238 aa).

The protein belongs to the LutA/YkgE family.

In terms of biological role, is involved in L-lactate degradation and allows cells to grow with lactate as the sole carbon source. This Bacillus pumilus (strain SAFR-032) protein is Lactate utilization protein A.